A 1451-amino-acid chain; its full sequence is DNA polymerase III PolC-type (1451 aa).

One can recognise an Exonuclease domain in the interval 416 to 575 (FVIFDIETTG…YDTEALKKVF (160 aa)).

It belongs to the DNA polymerase type-C family. PolC subfamily.

The protein localises to the cytoplasm. It catalyses the reaction DNA(n) + a 2'-deoxyribonucleoside 5'-triphosphate = DNA(n+1) + diphosphate. Required for replicative DNA synthesis. This DNA polymerase also exhibits 3' to 5' exonuclease activity. In Mycoplasma genitalium (strain ATCC 33530 / DSM 19775 / NCTC 10195 / G37) (Mycoplasmoides genitalium), this protein is DNA polymerase III PolC-type.